The following is a 294-amino-acid chain: MTPFGISVPASSGNVGPGFDSTGLALGLYLHLNVEDANSIQFYSDGESTPTENHFIWNIAENIANKHGIRLPACKVQETNEIPLARGLGSSASAIVAGIELANQLGNLHLTPEQKLQYGTEIEGHPDNVAPSIYGGLVISTVLEKEIEHIQLRDIDVDIVAYIPNIELKTSVSRNCLPDSYNRDYAAKASAISNLTIAALYSKDYKLAGKLMEEDLFHEPFRSELIPNFAYIREEAKKYGAFGTILSGAGPTMLSITPKGNGPTLQNNMSKLSLLADYQVEYIPIDYQGISIQE.

Residue 83-93 (PLARGLGSSAS) participates in ATP binding.

This sequence belongs to the GHMP kinase family. Homoserine kinase subfamily.

It is found in the cytoplasm. The enzyme catalyses L-homoserine + ATP = O-phospho-L-homoserine + ADP + H(+). The protein operates within amino-acid biosynthesis; L-threonine biosynthesis; L-threonine from L-aspartate: step 4/5. In terms of biological role, catalyzes the ATP-dependent phosphorylation of L-homoserine to L-homoserine phosphate. This Oceanobacillus iheyensis (strain DSM 14371 / CIP 107618 / JCM 11309 / KCTC 3954 / HTE831) protein is Homoserine kinase.